Reading from the N-terminus, the 624-residue chain is Laccase-1 (624 aa).

Residues M1–S20 form the signal peptide. Plastocyanin-like domains are found at residues F72–N183 and D195–G343. Residues H117 and H119 each contribute to the Cu cation site. C138 and C578 form a disulfide bridge. An N-linked (GlcNAc...) asparagine glycan is attached at N149. The Cu cation site is built by H162 and H164. N-linked (GlcNAc...) asparagine glycans are attached at residues N242 and N430. A Plastocyanin-like 3 domain is found at I469–P562. Cu cation is bound by residues H480, H483, and H485. Residue N503 is glycosylated (N-linked (GlcNAc...) asparagine). Positions 543, 544, 545, and 549 each coordinate Cu cation. Residues A579–S604 are disordered. Positions S592–S604 are enriched in low complexity.

The protein belongs to the multicopper oxidase family. Requires Cu cation as cofactor.

Its subcellular location is the secreted. The protein resides in the cell wall. It catalyses the reaction 4 hydroquinone + O2 = 4 benzosemiquinone + 2 H2O. In terms of biological role, laccase that catalyzes the oxidation of certain aromatic compounds, including L-dopa, to quinones, which then polymerize to melanin. Able to oxidize a wide variety of aromatic diphenol and diamino groups in the ortho, meta, and para positions but not monophenolic groups such as in phenol, tyramine, or tyrosine. Plays an important role in virulence. Plays a role in dissemination to extrapulmonary sites but is not involved in pulmonary growth or in elicitation of cellular immune responses in the lung. The protein is Laccase-1 of Cryptococcus neoformans var. neoformans serotype D (strain B-3501A) (Filobasidiella neoformans).